A 482-amino-acid chain; its full sequence is Pyruvate kinase (482 aa).

Arg37 is a binding site for substrate. The K(+) site is built by Asn39, Ser41, and Asp71. Residue 39–42 (NFSH) participates in ATP binding. 2 residues coordinate ATP: Arg78 and Lys160. Glu222 contacts Mg(2+). 3 residues coordinate substrate: Gly245, Asp246, and Thr278. Asp246 is a Mg(2+) binding site.

The protein belongs to the pyruvate kinase family. In terms of assembly, homotetramer. Mg(2+) is required as a cofactor. The cofactor is K(+).

It carries out the reaction pyruvate + ATP = phosphoenolpyruvate + ADP + H(+). The protein operates within carbohydrate degradation; glycolysis; pyruvate from D-glyceraldehyde 3-phosphate: step 5/5. This is Pyruvate kinase (ttuE) from Agrobacterium vitis (Rhizobium vitis).